The sequence spans 127 residues: Glycine cleavage system H protein (127 aa).

The 83-residue stretch at 22–104 (KVRIGITDFA…YEKAWMIVVE (83 aa)) folds into the Lipoyl-binding domain. K63 bears the N6-lipoyllysine mark.

This sequence belongs to the GcvH family. In terms of assembly, the glycine cleavage system is composed of four proteins: P, T, L and H. (R)-lipoate serves as cofactor.

In terms of biological role, the glycine cleavage system catalyzes the degradation of glycine. The H protein shuttles the methylamine group of glycine from the P protein to the T protein. Functionally, is also involved in protein lipoylation via its role as an octanoyl/lipoyl carrier protein intermediate. This Bacillus licheniformis (strain ATCC 14580 / DSM 13 / JCM 2505 / CCUG 7422 / NBRC 12200 / NCIMB 9375 / NCTC 10341 / NRRL NRS-1264 / Gibson 46) protein is Glycine cleavage system H protein.